We begin with the raw amino-acid sequence, 271 residues long: Ribosomal RNA small subunit methyltransferase A (271 aa).

Positions 11, 13, 38, 59, 84, and 109 each coordinate S-adenosyl-L-methionine.

The protein belongs to the class I-like SAM-binding methyltransferase superfamily. rRNA adenine N(6)-methyltransferase family. RsmA subfamily.

It is found in the cytoplasm. It carries out the reaction adenosine(1518)/adenosine(1519) in 16S rRNA + 4 S-adenosyl-L-methionine = N(6)-dimethyladenosine(1518)/N(6)-dimethyladenosine(1519) in 16S rRNA + 4 S-adenosyl-L-homocysteine + 4 H(+). Functionally, specifically dimethylates two adjacent adenosines (A1518 and A1519) in the loop of a conserved hairpin near the 3'-end of 16S rRNA in the 30S particle. May play a critical role in biogenesis of 30S subunits. This Nostoc sp. (strain PCC 7120 / SAG 25.82 / UTEX 2576) protein is Ribosomal RNA small subunit methyltransferase A.